A 645-amino-acid chain; its full sequence is 1,4-alpha-glucan branching enzyme GlgB (645 aa).

The active-site Nucleophile is the Asp-309. Glu-352 acts as the Proton donor in catalysis. The interval 619–645 is disordered; it reads VKTRKGSKKQDGSKTKVRSNVTSRGKR. The segment covering 636–645 has biased composition (polar residues); the sequence is RSNVTSRGKR.

This sequence belongs to the glycosyl hydrolase 13 family. GlgB subfamily. As to quaternary structure, monomer.

It carries out the reaction Transfers a segment of a (1-&gt;4)-alpha-D-glucan chain to a primary hydroxy group in a similar glucan chain.. The protein operates within glycan biosynthesis; glycogen biosynthesis. Catalyzes the formation of the alpha-1,6-glucosidic linkages in glycogen by scission of a 1,4-alpha-linked oligosaccharide from growing alpha-1,4-glucan chains and the subsequent attachment of the oligosaccharide to the alpha-1,6 position. This Bacillus cereus (strain ATCC 14579 / DSM 31 / CCUG 7414 / JCM 2152 / NBRC 15305 / NCIMB 9373 / NCTC 2599 / NRRL B-3711) protein is 1,4-alpha-glucan branching enzyme GlgB.